Here is a 168-residue protein sequence, read N- to C-terminus: Thiol peroxidase (168 aa).

One can recognise a Thioredoxin domain in the interval 19-168 (PQAGSKAQTF…YEAALAVLKA (150 aa)). Cysteine 61 (cysteine sulfenic acid (-SOH) intermediate) is an active-site residue. A disulfide bridge links cysteine 61 with cysteine 95.

This sequence belongs to the peroxiredoxin family. Tpx subfamily. As to quaternary structure, homodimer.

The catalysed reaction is a hydroperoxide + [thioredoxin]-dithiol = an alcohol + [thioredoxin]-disulfide + H2O. In terms of biological role, thiol-specific peroxidase that catalyzes the reduction of hydrogen peroxide and organic hydroperoxides to water and alcohols, respectively. Plays a role in cell protection against oxidative stress by detoxifying peroxides. This chain is Thiol peroxidase, found in Shigella dysenteriae.